Here is a 402-residue protein sequence, read N- to C-terminus: Arginine biosynthesis bifunctional protein ArgJ (402 aa).

T152, K178, T189, E275, N397, and T402 together coordinate substrate. T189 serves as the catalytic Nucleophile.

The protein belongs to the ArgJ family. Heterotetramer of two alpha and two beta chains.

It is found in the cytoplasm. It catalyses the reaction N(2)-acetyl-L-ornithine + L-glutamate = N-acetyl-L-glutamate + L-ornithine. It carries out the reaction L-glutamate + acetyl-CoA = N-acetyl-L-glutamate + CoA + H(+). Its pathway is amino-acid biosynthesis; L-arginine biosynthesis; L-ornithine and N-acetyl-L-glutamate from L-glutamate and N(2)-acetyl-L-ornithine (cyclic): step 1/1. It functions in the pathway amino-acid biosynthesis; L-arginine biosynthesis; N(2)-acetyl-L-ornithine from L-glutamate: step 1/4. Functionally, catalyzes two activities which are involved in the cyclic version of arginine biosynthesis: the synthesis of N-acetylglutamate from glutamate and acetyl-CoA as the acetyl donor, and of ornithine by transacetylation between N(2)-acetylornithine and glutamate. The protein is Arginine biosynthesis bifunctional protein ArgJ of Lactiplantibacillus plantarum (strain ATCC BAA-793 / NCIMB 8826 / WCFS1) (Lactobacillus plantarum).